A 244-amino-acid chain; its full sequence is tRNA (guanine-N(1)-)-methyltransferase (244 aa).

Residues glycine 120 and isoleucine 140–leucine 145 contribute to the S-adenosyl-L-methionine site.

Belongs to the RNA methyltransferase TrmD family. As to quaternary structure, homodimer.

Its subcellular location is the cytoplasm. It carries out the reaction guanosine(37) in tRNA + S-adenosyl-L-methionine = N(1)-methylguanosine(37) in tRNA + S-adenosyl-L-homocysteine + H(+). Its function is as follows. Specifically methylates guanosine-37 in various tRNAs. The chain is tRNA (guanine-N(1)-)-methyltransferase from Brucella abortus (strain S19).